The primary structure comprises 313 residues: Ankyrin repeat family A protein 2 (313 aa).

ANK repeat units follow at residues 148–180, 181–213, 214–246, 247–279, and 280–313; these read ANSL…HTDE, EGFT…LLGK, GRES…EYDW, NGGT…IETD, and SGYN…NIKE.

As to quaternary structure, interacts (via ANK repeats) with CCDC8 (via PxLPxI/L motif); mediates the interaction with the 3M complex which is composed of CCDC8, CUL7 and OBSL1. Interacts (via ANK repeats) with HDAC4 (via PxLPxI/L motif). Interacts (via ANK repeats) with HDAC5 (via PxLPxI/L motif). Interacts (via ANK repeats) with LRP2/megalin (via PxLPxI/L motif). Interacts (via ANK repeats) with RFX7 (via PxLPxI/L motif). Interacts with AHRR. Interacts with NEK6.

The protein resides in the cytoplasm. It is found in the cytoskeleton. The protein localises to the membrane. May regulate the interaction between the 3M complex and the histone deacetylases HDAC4 and HDAC5. May also regulate LRP2/megalin. The protein is Ankyrin repeat family A protein 2 (ANKRA2) of Homo sapiens (Human).